The sequence spans 132 residues: Myelin P2 protein (132 aa).

Ser-2 bears the N-acetylserine mark. Arg-107 is a binding site for (9Z)-octadecenoate. Arg-107 provides a ligand contact to hexadecanoate. Cys-118 and Cys-125 are oxidised to a cystine. 127–129 is a (9Z)-octadecenoate binding site; the sequence is RIY. A hexadecanoate-binding site is contributed by 127–129; it reads RIY.

Belongs to the calycin superfamily. Fatty-acid binding protein (FABP) family. As to quaternary structure, monomer.

The protein localises to the cytoplasm. In terms of biological role, may play a role in lipid transport protein in Schwann cells. May bind cholesterol. The protein is Myelin P2 protein (PMP2) of Bos taurus (Bovine).